The chain runs to 451 residues: tRNA modification GTPase MnmE (451 aa).

(6S)-5-formyl-5,6,7,8-tetrahydrofolate is bound by residues R23, E80, and K119. The TrmE-type G domain maps to 215-372 (GIKVVLAGQP…LRAALLKTAG (158 aa)). N225 serves as a coordination point for K(+). Residues 225 to 230 (NVGKSS), 244 to 250 (TDIPGTT), and 269 to 272 (DTAG) each bind GTP. Mg(2+) is bound at residue S229. K(+) is bound by residues T244, I246, and T249. T250 lines the Mg(2+) pocket. Residue K451 participates in (6S)-5-formyl-5,6,7,8-tetrahydrofolate binding.

It belongs to the TRAFAC class TrmE-Era-EngA-EngB-Septin-like GTPase superfamily. TrmE GTPase family. As to quaternary structure, homodimer. Heterotetramer of two MnmE and two MnmG subunits. K(+) is required as a cofactor.

It localises to the cytoplasm. Its function is as follows. Exhibits a very high intrinsic GTPase hydrolysis rate. Involved in the addition of a carboxymethylaminomethyl (cmnm) group at the wobble position (U34) of certain tRNAs, forming tRNA-cmnm(5)s(2)U34. The chain is tRNA modification GTPase MnmE from Nitrosomonas europaea (strain ATCC 19718 / CIP 103999 / KCTC 2705 / NBRC 14298).